A 203-amino-acid chain; its full sequence is Pyridoxal 5'-phosphate synthase subunit PdxT (203 aa).

Residue 52 to 54 (GES) coordinates L-glutamine. Cys84 serves as the catalytic Nucleophile. L-glutamine-binding positions include Arg116 and 144-145 (IR). Residues His184 and Glu186 each act as charge relay system in the active site.

Belongs to the glutaminase PdxT/SNO family. In terms of assembly, in the presence of PdxS, forms a dodecamer of heterodimers. Only shows activity in the heterodimer.

The enzyme catalyses aldehydo-D-ribose 5-phosphate + D-glyceraldehyde 3-phosphate + L-glutamine = pyridoxal 5'-phosphate + L-glutamate + phosphate + 3 H2O + H(+). The catalysed reaction is L-glutamine + H2O = L-glutamate + NH4(+). The protein operates within cofactor biosynthesis; pyridoxal 5'-phosphate biosynthesis. In terms of biological role, catalyzes the hydrolysis of glutamine to glutamate and ammonia as part of the biosynthesis of pyridoxal 5'-phosphate. The resulting ammonia molecule is channeled to the active site of PdxS. This Aeropyrum pernix (strain ATCC 700893 / DSM 11879 / JCM 9820 / NBRC 100138 / K1) protein is Pyridoxal 5'-phosphate synthase subunit PdxT.